We begin with the raw amino-acid sequence, 390 residues long: Lipid-A-disaccharide synthase (390 aa).

It belongs to the LpxB family.

The catalysed reaction is a lipid X + a UDP-2-N,3-O-bis[(3R)-3-hydroxyacyl]-alpha-D-glucosamine = a lipid A disaccharide + UDP + H(+). The protein operates within bacterial outer membrane biogenesis; LPS lipid A biosynthesis. Its function is as follows. Condensation of UDP-2,3-diacylglucosamine and 2,3-diacylglucosamine-1-phosphate to form lipid A disaccharide, a precursor of lipid A, a phosphorylated glycolipid that anchors the lipopolysaccharide to the outer membrane of the cell. The chain is Lipid-A-disaccharide synthase from Rickettsia felis (strain ATCC VR-1525 / URRWXCal2) (Rickettsia azadi).